The chain runs to 162 residues: Superoxide dismutase [Cu-Zn] (162 aa).

Positions 1–20 (MNKSGIILIGTILFSSMAIA) are cleaved as a signal peptide. 3 residues coordinate Cu cation: H66, H68, and H83. A disulfide bridge links C73 with C158. Residues H83, H92, H100, and D103 each coordinate Zn(2+). H137 is a Cu cation binding site.

It belongs to the Cu-Zn superoxide dismutase family. Homodimer. The cofactor is Cu cation. Zn(2+) serves as cofactor.

It localises to the periplasm. The enzyme catalyses 2 superoxide + 2 H(+) = H2O2 + O2. Its function is as follows. Destroys radicals which are normally produced within the cells and which are toxic to biological systems. The chain is Superoxide dismutase [Cu-Zn] (sodC) from Legionella pneumophila.